Consider the following 295-residue polypeptide: Ethanolamine ammonia-lyase small subunit (295 aa).

Adenosylcob(III)alamin contacts are provided by valine 207, glutamate 228, and cysteine 258.

This sequence belongs to the EutC family. As to quaternary structure, the basic unit is a heterodimer which dimerizes to form tetramers. The heterotetramers trimerize; 6 large subunits form a core ring with 6 small subunits projecting outwards. Adenosylcob(III)alamin is required as a cofactor.

It is found in the bacterial microcompartment. It carries out the reaction ethanolamine = acetaldehyde + NH4(+). The protein operates within amine and polyamine degradation; ethanolamine degradation. In terms of biological role, catalyzes the deamination of various vicinal amino-alcohols to oxo compounds. Allows this organism to utilize ethanolamine as the sole source of nitrogen and carbon in the presence of external vitamin B12. The polypeptide is Ethanolamine ammonia-lyase small subunit (Shigella sonnei (strain Ss046)).